Reading from the N-terminus, the 834-residue chain is Periplasmic nitrate reductase (834 aa).

Positions 1 to 29 form a signal peptide, tat-type signal; the sequence is MSLTRRQFAKANAAAIAATVAGMPIASTA. Residues 41-97 enclose the 4Fe-4S Mo/W bis-MGD-type domain; that stretch reads LKWDKAPCRFCGTGCGVMVATRENRVVATHGDVKADVNRGINCVKGYFLSKIMYGTD. Positions 48, 51, 55, and 83 each coordinate [4Fe-4S] cluster. Residues lysine 85, glutamine 152, asparagine 177, cysteine 181, 214 to 221, 245 to 249, 264 to 266, methionine 375, glutamine 379, asparagine 485, 511 to 512, lysine 534, aspartate 561, and 721 to 730 each bind Mo-bis(molybdopterin guanine dinucleotide); these read WGSNMAEM, STFEH, QTD, SD, and TGRVLEHWHT. Phenylalanine 797 lines the substrate pocket. The Mo-bis(molybdopterin guanine dinucleotide) site is built by asparagine 805 and lysine 822.

The protein belongs to the prokaryotic molybdopterin-containing oxidoreductase family. NasA/NapA/NarB subfamily. As to quaternary structure, component of the periplasmic nitrate reductase NapAB complex composed of NapA and NapB. [4Fe-4S] cluster is required as a cofactor. Requires Mo-bis(molybdopterin guanine dinucleotide) as cofactor. Post-translationally, predicted to be exported by the Tat system. The position of the signal peptide cleavage has not been experimentally proven.

The protein localises to the periplasm. It carries out the reaction 2 Fe(II)-[cytochrome] + nitrate + 2 H(+) = 2 Fe(III)-[cytochrome] + nitrite + H2O. In terms of biological role, catalytic subunit of the periplasmic nitrate reductase complex NapAB. Receives electrons from NapB and catalyzes the reduction of nitrate to nitrite. This Stutzerimonas stutzeri (Pseudomonas stutzeri) protein is Periplasmic nitrate reductase.